Here is a 282-residue protein sequence, read N- to C-terminus: Transformer-2 protein homolog alpha (282 aa).

Residues 1 to 118 (MSDVEENNFE…TGSRANPDPN (118 aa)) are disordered. Serine 2 is subject to N-acetylserine. Residues serine 2 and serine 14 each carry the phosphoserine modification. At threonine 24 the chain carries Phosphothreonine. Over residues 51-84 (RSRSKSRSRSRRHSHRRYTRSRSHSHSHRRRSRS) the composition is skewed to basic residues. Phosphoserine occurs at positions 82, 84, and 86. Threonine 88 is subject to Phosphothreonine. Positions 92-110 (RRRRSRSHSPMSNRRRHTG) are enriched in basic residues. Residues serine 96 and serine 98 each carry the phosphoserine modification. In terms of domain architecture, RRM spans 119 to 197 (TCLGVFGLSL…RRIRVDYSIT (79 aa)). Lysine 198 participates in a covalent cross-link: Glycyl lysine isopeptide (Lys-Gly) (interchain with G-Cter in SUMO2). Positions 198 to 225 (KRAHTPTPGIYMGRPTHSGGGGGGGGGG) are linker. Disordered stretches follow at residues 201-245 (HTPT…YDRG) and 260-282 (SPSP…PRRY). A phosphothreonine mark is found at threonine 202 and threonine 204. A compositionally biased stretch (gly residues) spans 215–230 (SGGGGGGGGGGGGGGG). Arginine 232 carries the post-translational modification Omega-N-methylarginine. The segment covering 232–245 (RRRDSYYDRGYDRG) has biased composition (basic and acidic residues). Serine 236 is modified (phosphoserine). Residues 268–282 (YRSRSRSRSYSPRRY) are compositionally biased toward basic residues.

Belongs to the splicing factor SR family. As to quaternary structure, binds to A3 enhancer proteins SRp75, SRp55, SRp40 and SRp30. Interacts with ILDR1 (via C-terminus) and ILDR2. In terms of processing, phosphorylated in the RS domains.

It localises to the nucleus. Its function is as follows. Sequence-specific RNA-binding protein which participates in the control of pre-mRNA splicing. In Homo sapiens (Human), this protein is Transformer-2 protein homolog alpha.